The primary structure comprises 189 residues: Keratin-associated protein 5-2 (189 aa).

8 tandem repeats follow at residues 21–24 (CCKP), 27–30 (CCKP), 33–36 (CCVP), 134–137 (CCKP), 144–147 (CCKP), 159–162 (CCKP), 169–172 (CCKP), and 179–182 (CCAP). The 8 X 4 AA repeats of C-C-X-P stretch occupies residues 27–182 (CCKPVCCCVP…CCCQSSCCAP (156 aa)).

This sequence belongs to the KRTAP type 5 family. Interacts with hair keratins.

In terms of biological role, in the hair cortex, hair keratin intermediate filaments are embedded in an interfilamentous matrix, consisting of hair keratin-associated protein (KRTAP), which are essential for the formation of a rigid and resistant hair shaft through their extensive disulfide bond cross-linking with abundant cysteine residues of hair keratins. The matrix proteins include the high-sulfur and high-glycine-tyrosine keratins. In Mus musculus (Mouse), this protein is Keratin-associated protein 5-2.